The sequence spans 239 residues: MLVIPAIDLQSGRCVRLKQGRFDQVTQFSVFPIERALHFAKLGAKRLHVVDLDGARSGKMQQLELICSMQKTGIPIQAGGGIRSIEQALECSNAGISQLVIGSLAITNPDLTIQIIEKIKPENIVLALDVRVDTKVPLLAINGWQNNSTSSLWEVVSYYENYGIKNILCTDIACDGMMNGPNFDLYQQAVEYFPQIAWQASGGVRHMQDITTLNSLGISAVILGLMLYQDNVNFEELLC.

Residue aspartate 8 is the Proton acceptor of the active site. The active-site Proton donor is the aspartate 129.

This sequence belongs to the HisA/HisF family.

The protein localises to the cytoplasm. The catalysed reaction is 1-(5-phospho-beta-D-ribosyl)-5-[(5-phospho-beta-D-ribosylamino)methylideneamino]imidazole-4-carboxamide = 5-[(5-phospho-1-deoxy-D-ribulos-1-ylimino)methylamino]-1-(5-phospho-beta-D-ribosyl)imidazole-4-carboxamide. It participates in amino-acid biosynthesis; L-histidine biosynthesis; L-histidine from 5-phospho-alpha-D-ribose 1-diphosphate: step 4/9. In Legionella pneumophila (strain Paris), this protein is 1-(5-phosphoribosyl)-5-[(5-phosphoribosylamino)methylideneamino] imidazole-4-carboxamide isomerase.